A 95-amino-acid polypeptide reads, in one-letter code: Protein TusB (95 aa).

The protein belongs to the DsrH/TusB family. In terms of assembly, heterohexamer, formed by a dimer of trimers. The hexameric TusBCD complex contains 2 copies each of TusB, TusC and TusD. The TusBCD complex interacts with TusE.

It is found in the cytoplasm. In terms of biological role, part of a sulfur-relay system required for 2-thiolation of 5-methylaminomethyl-2-thiouridine (mnm(5)s(2)U) at tRNA wobble positions. This chain is Protein TusB, found in Escherichia coli O45:K1 (strain S88 / ExPEC).